The sequence spans 285 residues: Cold sensitive U2 snRNA suppressor 2 (285 aa).

The RRM 1 domain occupies 45–130 (TSIYISGLPT…KQIRVERAQF (86 aa)). The segment covering 135–149 (GDNMHGKENDLKEFN) has biased composition (basic and acidic residues). The segment at 135–154 (GDNMHGKENDLKEFNGPEPP) is disordered. Serine 163 carries the phosphoserine modification. The RRM 2 domain occupies 183–265 (RTVIFANVFN…QKLLAFISGD (83 aa)). The tract at residues 265–285 (DENTSSTSDKNEDSEVEDDLI) is disordered. The segment covering 276–285 (EDSEVEDDLI) has biased composition (acidic residues).

This sequence belongs to the HTATSF1 family. In terms of assembly, interacts with PRP11. Associates with the U2 snRNA.

Its function is as follows. U2 snRNP protein which helps to refold U2 into a structure favorable for its binding to SF3b and SF3a prior to spliceosome assembly. Mediates functional interactions between U2 RNA and PRP5. Enforces ATP dependence during formation of the prespliceosome by brokering an interaction between PRP5 and the U2 snRNP that depends on correct U2 RNA structure. The protein is Cold sensitive U2 snRNA suppressor 2 (CUS2) of Saccharomyces cerevisiae (strain ATCC 204508 / S288c) (Baker's yeast).